We begin with the raw amino-acid sequence, 360 residues long: Glucan endo-1,3-beta-glucosidase B (360 aa).

The N-terminal stretch at 1–25 (MATSQIAIIVLLGLLVATNIHITEA) is a signal peptide. The residue at position 26 (Gln-26) is a Pyrrolidone carboxylic acid. The active-site Proton donor is Glu-120. Catalysis depends on Glu-265, which acts as the Nucleophile. The propeptide at 341 to 360 (VSERVWDITNSTASSLTSEI) is removed in mature form. Asn-350 carries N-linked (GlcNAc...) asparagine glycosylation.

It belongs to the glycosyl hydrolase 17 family.

The protein localises to the vacuole. It catalyses the reaction Hydrolysis of (1-&gt;3)-beta-D-glucosidic linkages in (1-&gt;3)-beta-D-glucans.. Its function is as follows. Implicated in the defense of plants against pathogens. The polypeptide is Glucan endo-1,3-beta-glucosidase B (Solanum lycopersicum (Tomato)).